The following is a 324-amino-acid chain: 4-hydroxy-3-methylbut-2-enyl diphosphate reductase (324 aa).

C28 is a binding site for [4Fe-4S] cluster. (2E)-4-hydroxy-3-methylbut-2-enyl diphosphate-binding residues include H57 and H90. H57 and H90 together coordinate dimethylallyl diphosphate. Positions 57 and 90 each coordinate isopentenyl diphosphate. C112 contacts [4Fe-4S] cluster. H140 lines the (2E)-4-hydroxy-3-methylbut-2-enyl diphosphate pocket. Residue H140 participates in dimethylallyl diphosphate binding. Position 140 (H140) interacts with isopentenyl diphosphate. E142 functions as the Proton donor in the catalytic mechanism. Residue T180 coordinates (2E)-4-hydroxy-3-methylbut-2-enyl diphosphate. C210 is a [4Fe-4S] cluster binding site. Positions 238, 239, 240, and 282 each coordinate (2E)-4-hydroxy-3-methylbut-2-enyl diphosphate. The dimethylallyl diphosphate site is built by S238, S239, N240, and S282. Residues S238, S239, N240, and S282 each contribute to the isopentenyl diphosphate site.

Belongs to the IspH family. It depends on [4Fe-4S] cluster as a cofactor.

It carries out the reaction isopentenyl diphosphate + 2 oxidized [2Fe-2S]-[ferredoxin] + H2O = (2E)-4-hydroxy-3-methylbut-2-enyl diphosphate + 2 reduced [2Fe-2S]-[ferredoxin] + 2 H(+). It catalyses the reaction dimethylallyl diphosphate + 2 oxidized [2Fe-2S]-[ferredoxin] + H2O = (2E)-4-hydroxy-3-methylbut-2-enyl diphosphate + 2 reduced [2Fe-2S]-[ferredoxin] + 2 H(+). It functions in the pathway isoprenoid biosynthesis; dimethylallyl diphosphate biosynthesis; dimethylallyl diphosphate from (2E)-4-hydroxy-3-methylbutenyl diphosphate: step 1/1. The protein operates within isoprenoid biosynthesis; isopentenyl diphosphate biosynthesis via DXP pathway; isopentenyl diphosphate from 1-deoxy-D-xylulose 5-phosphate: step 6/6. Functionally, catalyzes the conversion of 1-hydroxy-2-methyl-2-(E)-butenyl 4-diphosphate (HMBPP) into a mixture of isopentenyl diphosphate (IPP) and dimethylallyl diphosphate (DMAPP). Acts in the terminal step of the DOXP/MEP pathway for isoprenoid precursor biosynthesis. The polypeptide is 4-hydroxy-3-methylbut-2-enyl diphosphate reductase (Ralstonia nicotianae (strain ATCC BAA-1114 / GMI1000) (Ralstonia solanacearum)).